A 204-amino-acid chain; its full sequence is Lymphotoxin-alpha (204 aa).

A signal peptide spans Met-1–Gly-33. The THD domain maps to Pro-62–Leu-204. N-linked (GlcNAc...) asparagine glycosylation is present at Asn-95. A disulfide bond links Cys-119 and Cys-155.

The protein belongs to the tumor necrosis factor family. As to quaternary structure, homotrimer, and heterotrimer of either two LTB and one LTA subunits or (less prevalent) two LTA and one LTB subunits. Interacts with TNFRSF14.

The protein localises to the secreted. Its subcellular location is the membrane. Cytokine that in its homotrimeric form binds to TNFRSF1A/TNFR1, TNFRSF1B/TNFBR and TNFRSF14/HVEM. In its heterotrimeric form with LTB binds to TNFRSF3/LTBR. Lymphotoxin is produced by lymphocytes and is cytotoxic for a wide range of tumor cells in vitro and in vivo. This Bos taurus (Bovine) protein is Lymphotoxin-alpha (LTA).